The chain runs to 287 residues: Protoheme IX farnesyltransferase (287 aa).

Helical transmembrane passes span 9–29, 31–51, 94–114, 132–152, 158–178, 202–222, 228–248, and 267–287; these read IVTM…SATL, LIDW…AGAA, IILW…TWLI, VGAI…GGTL, WMLF…IAWL, AWQS…LAWF, VASA…WPLL, and LRWS…RASL.

This sequence belongs to the UbiA prenyltransferase family. Protoheme IX farnesyltransferase subfamily.

The protein localises to the cell inner membrane. It catalyses the reaction heme b + (2E,6E)-farnesyl diphosphate + H2O = Fe(II)-heme o + diphosphate. It functions in the pathway porphyrin-containing compound metabolism; heme O biosynthesis; heme O from protoheme: step 1/1. Converts heme B (protoheme IX) to heme O by substitution of the vinyl group on carbon 2 of heme B porphyrin ring with a hydroxyethyl farnesyl side group. In Rhodopirellula baltica (strain DSM 10527 / NCIMB 13988 / SH1), this protein is Protoheme IX farnesyltransferase.